The chain runs to 322 residues: Pilin gene-inverting protein (322 aa).

Its function is as follows. May be the site-specific invertase required for pilin gene inversion. Moraxella can express either a Q or I pilin; the inversion of 2 kb of DNA determines which pilin is expressed. This is Pilin gene-inverting protein (piv) from Moraxella bovis.